Reading from the N-terminus, the 587-residue chain is Aspartate--tRNA ligase (587 aa).

Glu173 is an L-aspartate binding site. The interval 197–200 (QTLK) is aspartate. Arg219 lines the L-aspartate pocket. Residues 219 to 221 (RDE) and Gln228 each bind ATP. An L-aspartate-binding site is contributed by His446. ATP is bound at residue Glu480. An L-aspartate-binding site is contributed by Arg487. 532 to 535 (GLDR) contributes to the ATP binding site.

The protein belongs to the class-II aminoacyl-tRNA synthetase family. Type 1 subfamily. As to quaternary structure, homodimer.

Its subcellular location is the cytoplasm. It catalyses the reaction tRNA(Asp) + L-aspartate + ATP = L-aspartyl-tRNA(Asp) + AMP + diphosphate. Catalyzes the attachment of L-aspartate to tRNA(Asp) in a two-step reaction: L-aspartate is first activated by ATP to form Asp-AMP and then transferred to the acceptor end of tRNA(Asp). The sequence is that of Aspartate--tRNA ligase from Phocaeicola vulgatus (strain ATCC 8482 / DSM 1447 / JCM 5826 / CCUG 4940 / NBRC 14291 / NCTC 11154) (Bacteroides vulgatus).